A 134-amino-acid chain; its full sequence is Phosphomevalonate dehydratase small subunit (134 aa).

The Proton acceptor role is filled by serine 62.

This sequence belongs to the AcnX type II small subunit family. Heterodimer composed of a large subunit (PMDh-L) and a small subunit (PMDh-S).

It carries out the reaction (R)-5-phosphomevalonate = (2E)-3-methyl-5-phosphooxypent-2-enoate + H2O. It participates in isoprenoid biosynthesis; isopentenyl diphosphate biosynthesis via mevalonate pathway. Component of a hydro-lyase that catalyzes the dehydration of mevalonate 5-phosphate (MVA5P) to form trans-anhydromevalonate 5-phosphate (tAHMP). Involved in the archaeal mevalonate (MVA) pathway, which provides fundamental precursors for isoprenoid biosynthesis, such as isopentenyl diphosphate (IPP) and dimethylallyl diphosphate (DMAPP). The chain is Phosphomevalonate dehydratase small subunit from Pyrococcus horikoshii (strain ATCC 700860 / DSM 12428 / JCM 9974 / NBRC 100139 / OT-3).